Reading from the N-terminus, the 236-residue chain is 1-(5-phosphoribosyl)-5-[(5-phosphoribosylamino)methylideneamino] imidazole-4-carboxamide isomerase (236 aa).

Catalysis depends on Asp-8, which acts as the Proton acceptor. Residue Asp-129 is the Proton donor of the active site.

It belongs to the HisA/HisF family.

The protein resides in the cytoplasm. It carries out the reaction 1-(5-phospho-beta-D-ribosyl)-5-[(5-phospho-beta-D-ribosylamino)methylideneamino]imidazole-4-carboxamide = 5-[(5-phospho-1-deoxy-D-ribulos-1-ylimino)methylamino]-1-(5-phospho-beta-D-ribosyl)imidazole-4-carboxamide. The protein operates within amino-acid biosynthesis; L-histidine biosynthesis; L-histidine from 5-phospho-alpha-D-ribose 1-diphosphate: step 4/9. This Methanoregula boonei (strain DSM 21154 / JCM 14090 / 6A8) protein is 1-(5-phosphoribosyl)-5-[(5-phosphoribosylamino)methylideneamino] imidazole-4-carboxamide isomerase.